Consider the following 118-residue polypeptide: Aspartate 1-decarboxylase (118 aa).

The active-site Schiff-base intermediate with substrate; via pyruvic acid is the Ser-25. At Ser-25 the chain carries Pyruvic acid (Ser). Residue Thr-57 coordinates substrate. The active-site Proton donor is Tyr-58. 73–75 (GAA) lines the substrate pocket.

It belongs to the PanD family. Heterooctamer of four alpha and four beta subunits. Pyruvate serves as cofactor. Is synthesized initially as an inactive proenzyme, which is activated by self-cleavage at a specific serine bond to produce a beta-subunit with a hydroxyl group at its C-terminus and an alpha-subunit with a pyruvoyl group at its N-terminus.

Its subcellular location is the cytoplasm. It catalyses the reaction L-aspartate + H(+) = beta-alanine + CO2. It participates in cofactor biosynthesis; (R)-pantothenate biosynthesis; beta-alanine from L-aspartate: step 1/1. Catalyzes the pyruvoyl-dependent decarboxylation of aspartate to produce beta-alanine. This is Aspartate 1-decarboxylase from Phenylobacterium zucineum (strain HLK1).